Reading from the N-terminus, the 242-residue chain is Biosynthetic peptidoglycan transglycosylase (242 aa).

A helical transmembrane segment spans residues 19–39; sequence LLLACAVLWGGGVALFSIVPV.

This sequence belongs to the glycosyltransferase 51 family.

The protein resides in the cell inner membrane. It carries out the reaction [GlcNAc-(1-&gt;4)-Mur2Ac(oyl-L-Ala-gamma-D-Glu-L-Lys-D-Ala-D-Ala)](n)-di-trans,octa-cis-undecaprenyl diphosphate + beta-D-GlcNAc-(1-&gt;4)-Mur2Ac(oyl-L-Ala-gamma-D-Glu-L-Lys-D-Ala-D-Ala)-di-trans,octa-cis-undecaprenyl diphosphate = [GlcNAc-(1-&gt;4)-Mur2Ac(oyl-L-Ala-gamma-D-Glu-L-Lys-D-Ala-D-Ala)](n+1)-di-trans,octa-cis-undecaprenyl diphosphate + di-trans,octa-cis-undecaprenyl diphosphate + H(+). The protein operates within cell wall biogenesis; peptidoglycan biosynthesis. Functionally, peptidoglycan polymerase that catalyzes glycan chain elongation from lipid-linked precursors. The chain is Biosynthetic peptidoglycan transglycosylase from Klebsiella oxytoca.